A 316-amino-acid polypeptide reads, in one-letter code: Porphobilinogen deaminase (316 aa).

Cysteine 245 is modified (S-(dipyrrolylmethanemethyl)cysteine).

Belongs to the HMBS family. In terms of assembly, monomer. Dipyrromethane is required as a cofactor.

It carries out the reaction 4 porphobilinogen + H2O = hydroxymethylbilane + 4 NH4(+). The protein operates within porphyrin-containing compound metabolism; protoporphyrin-IX biosynthesis; coproporphyrinogen-III from 5-aminolevulinate: step 2/4. Its pathway is porphyrin-containing compound metabolism; chlorophyll biosynthesis. In terms of biological role, tetrapolymerization of the monopyrrole PBG into the hydroxymethylbilane pre-uroporphyrinogen in several discrete steps. The polypeptide is Porphobilinogen deaminase (Synechococcus sp. (strain CC9311)).